The chain runs to 512 residues: Chromatin assembly factor 1 subunit B (512 aa).

WD repeat units follow at residues Asp-16–Lys-56, Arg-65–Ala-105, Ser-126–Gln-165, and Asp-168–Lys-207. Residues Asp-239 to Pro-257 show a composition bias toward polar residues. The interval Asp-239–His-261 is disordered. WD repeat units follow at residues Ser-373–Arg-413 and Leu-417–Gln-458. Residues His-459 to Pro-512 form a disordered region. Ser-468, Ser-470, and Ser-473 each carry phosphoserine. Residues Ala-469 to Leu-490 show a composition bias toward polar residues.

This sequence belongs to the WD repeat HIR1 family. In terms of assembly, component of chromatin assembly factor 1 (CAF-1), composed of pcf1, pcf2 and pcf3. Interacts with pcn1/PCNA during S-phase. Interacts with swi6 at the G1/S-phase transition and early S-phase, but not in the G2 phase. The CAF-1 complex interacts with histone H3-H4 dimers.

The protein resides in the cytoplasm. Its subcellular location is the nucleus. In terms of biological role, acts as a component of the histone chaperone complex chromatin assembly factor 1 (CAF-1), which assembles histone octamers onto DNA during replication and repair. CAF-1 performs the first step of the nucleosome assembly process, bringing newly synthesized histones H3 and H4 to replicating DNA; histones H2A/H2B can bind to this chromatin precursor subsequent to DNA replication to complete the histone octamer. Plays a role in the maintenance of heterochromatin. The polypeptide is Chromatin assembly factor 1 subunit B (Schizosaccharomyces pombe (strain 972 / ATCC 24843) (Fission yeast)).